The following is a 166-amino-acid chain: Small ribosomal subunit protein bS6 (166 aa).

A disordered region spans residues 97-166 (EEGPSAMMRK…EEAETATDGE (70 aa)). Over residues 105–159 (RKADRDRERDDRGGGFRGEREGGFRGDREGGFRGGDRDGGGFRGDRGPRRPREEA) the composition is skewed to basic and acidic residues.

This sequence belongs to the bacterial ribosomal protein bS6 family.

Functionally, binds together with bS18 to 16S ribosomal RNA. This is Small ribosomal subunit protein bS6 from Bradyrhizobium diazoefficiens (strain JCM 10833 / BCRC 13528 / IAM 13628 / NBRC 14792 / USDA 110).